The primary structure comprises 208 residues: Pyridoxine/pyridoxamine 5'-phosphate oxidase (208 aa).

FMN-binding positions include 55-60, 70-71, K77, and Q99; these read RMVLLK and YT. K60 contacts substrate. Residues Y117, R121, and S125 each contribute to the substrate site. Residues 134 to 135 and W180 contribute to the FMN site; that span reads QS. Substrate is bound at residue 186–188; sequence RIH. R190 contributes to the FMN binding site.

This sequence belongs to the pyridoxamine 5'-phosphate oxidase family. Homodimer. It depends on FMN as a cofactor.

It carries out the reaction pyridoxamine 5'-phosphate + O2 + H2O = pyridoxal 5'-phosphate + H2O2 + NH4(+). The catalysed reaction is pyridoxine 5'-phosphate + O2 = pyridoxal 5'-phosphate + H2O2. It participates in cofactor metabolism; pyridoxal 5'-phosphate salvage; pyridoxal 5'-phosphate from pyridoxamine 5'-phosphate: step 1/1. Its pathway is cofactor metabolism; pyridoxal 5'-phosphate salvage; pyridoxal 5'-phosphate from pyridoxine 5'-phosphate: step 1/1. In terms of biological role, catalyzes the oxidation of either pyridoxine 5'-phosphate (PNP) or pyridoxamine 5'-phosphate (PMP) into pyridoxal 5'-phosphate (PLP). The protein is Pyridoxine/pyridoxamine 5'-phosphate oxidase of Pelagibacter ubique (strain HTCC1062).